The primary structure comprises 242 residues: Dickkopf-like protein 1 (242 aa).

The signal sequence occupies residues methionine 1–alanine 30. 2 N-linked (GlcNAc...) asparagine glycosylation sites follow: asparagine 97 and asparagine 112.

As to quaternary structure, interacts with SLXL1; Co-localize in seminiferous tubules. Interacts with SLY. In terms of processing, N-glycosylated during spermatogenesis. Not N-glycosylated in mature sperm. More highly expressed in adult testis than in fetal testis. Exclusively expressed in the testis (at protein level). Intense expression in stages II, III and IV of spermatogenesis, whereas expression is lower in stage I.

Its subcellular location is the secreted. The protein localises to the cytoplasmic vesicle. It is found in the secretory vesicle. It localises to the acrosome. Functionally, involved in fertilization by facilitating sperm penetration of the zona pellucida. May promote spermatocyte apoptosis, thereby limiting sperm production. In adults, may reduce testosterone synthesis in Leydig cells. Is not essential either for development or fertility. The chain is Dickkopf-like protein 1 from Homo sapiens (Human).